The sequence spans 244 residues: Serine acetyltransferase (244 aa).

It belongs to the transferase hexapeptide repeat family.

Its subcellular location is the cytoplasm. It carries out the reaction L-serine + acetyl-CoA = O-acetyl-L-serine + CoA. The protein operates within amino-acid biosynthesis; L-cysteine biosynthesis; L-cysteine from L-serine: step 1/2. The chain is Serine acetyltransferase (cysE) from Synechococcus elongatus (strain ATCC 33912 / PCC 7942 / FACHB-805) (Anacystis nidulans R2).